The chain runs to 350 residues: Ion-translocating oxidoreductase complex subunit D (350 aa).

Helical transmembrane passes span 25–45, 89–109, and 124–144; these read ALCL…GSLI, IPPL…IIIV, and AMAG…SWVA. An FMN phosphoryl threonine modification is found at Thr-185. A run of 5 helical transmembrane segments spans residues 212-232, 239-259, 265-285, 298-318, and 319-339; these read SYGV…LVLL, WHIS…GFLI, VSPL…FIAT, LIFG…GGYP, and DAVA…DHYV.

This sequence belongs to the NqrB/RnfD family. As to quaternary structure, the complex is composed of six subunits: RnfA, RnfB, RnfC, RnfD, RnfE and RnfG. FMN is required as a cofactor.

It is found in the cell inner membrane. In terms of biological role, part of a membrane-bound complex that couples electron transfer with translocation of ions across the membrane. The polypeptide is Ion-translocating oxidoreductase complex subunit D (Shewanella denitrificans (strain OS217 / ATCC BAA-1090 / DSM 15013)).